The chain runs to 376 residues: Dihydroorotate dehydrogenase (quinone) (376 aa).

FMN is bound by residues 74-78 (AGFDK) and Thr98. Lys78 contributes to the substrate binding site. 123 to 127 (NRMGF) is a substrate binding site. The FMN site is built by Asn155 and Asn188. Substrate is bound at residue Asn188. Ser191 (nucleophile) is an active-site residue. Residue Asn193 participates in substrate binding. FMN-binding residues include Lys226 and Thr254. A substrate-binding site is contributed by 255–256 (NT). Residues Gly284, Gly313, and 334–335 (YT) contribute to the FMN site.

This sequence belongs to the dihydroorotate dehydrogenase family. Type 2 subfamily. As to quaternary structure, monomer. FMN is required as a cofactor.

It localises to the cell membrane. The enzyme catalyses (S)-dihydroorotate + a quinone = orotate + a quinol. Its pathway is pyrimidine metabolism; UMP biosynthesis via de novo pathway; orotate from (S)-dihydroorotate (quinone route): step 1/1. Catalyzes the conversion of dihydroorotate to orotate with quinone as electron acceptor. The polypeptide is Dihydroorotate dehydrogenase (quinone) (Nostoc punctiforme (strain ATCC 29133 / PCC 73102)).